Consider the following 396-residue polypeptide: Elongation factor Tu (396 aa).

In terms of domain architecture, tr-type G spans 10–206; the sequence is KPHVNVGTIG…AMDEYIPTPE (197 aa). Positions 19-26 are G1; sequence GHVDHGKT. 19 to 26 serves as a coordination point for GTP; the sequence is GHVDHGKT. A Mg(2+)-binding site is contributed by Thr-26. Residues 60 to 64 form a G2 region; it reads GITIA. Residues 81-84 are G3; it reads DCPG. Residues 81 to 85 and 136 to 139 contribute to the GTP site; these read DCPGH and NKAD. The tract at residues 136-139 is G4; the sequence is NKAD. The G5 stretch occupies residues 174-176; the sequence is SAL.

It belongs to the TRAFAC class translation factor GTPase superfamily. Classic translation factor GTPase family. EF-Tu/EF-1A subfamily. As to quaternary structure, monomer.

The protein localises to the cytoplasm. The enzyme catalyses GTP + H2O = GDP + phosphate + H(+). GTP hydrolase that promotes the GTP-dependent binding of aminoacyl-tRNA to the A-site of ribosomes during protein biosynthesis. This Alkalilimnicola ehrlichii (strain ATCC BAA-1101 / DSM 17681 / MLHE-1) protein is Elongation factor Tu.